The primary structure comprises 63 residues: MKANDIRDLSTTEIQDQEKALKEELFNLRFQLATGQLENTARIREVRKAIARMKTIVRERELA.

This sequence belongs to the universal ribosomal protein uL29 family.

This chain is Large ribosomal subunit protein uL29, found in Listeria innocua serovar 6a (strain ATCC BAA-680 / CLIP 11262).